Reading from the N-terminus, the 417-residue chain is Neuropeptide FF receptor 2 (417 aa).

Over 1–45 (MGKRWDSNSSGSWDHIWSGNDTQHPWYSDINITYMNYYLHQPHVT) the chain is Extracellular. 3 N-linked (GlcNAc...) asparagine glycosylation sites follow: Asn8, Asn20, and Asn31. Residues 46 to 66 (AVFISSYFLIFFLCMVGNTVV) form a helical membrane-spanning segment. Over 67-82 (CFVVIRNRYMHTVTNF) the chain is Cytoplasmic. The helical transmembrane segment at 83–103 (FIFNLAISDLLVGIFCMPITL) threads the bilayer. Residues 104-119 (LDNIIAGWPFGSSMCK) lie on the Extracellular side of the membrane. An intrachain disulfide couples Cys118 to Cys206. The chain crosses the membrane as a helical span at residues 120-140 (ISGLVQGISVAASVFTLVAIA). The Cytoplasmic portion of the chain corresponds to 141–160 (VDRFRCVVYPFKPKLTVKTA). Residues 161–181 (FVMIVIIWGLAITIMTPSAIM) traverse the membrane as a helical segment. Over 182–217 (LHVQEEKYYRVRLSSHNKTSTVYWCREDWPNQEMRR) the chain is Extracellular. N-linked (GlcNAc...) asparagine glycosylation occurs at Asn198. A helical membrane pass occupies residues 218–238 (IYTTVLFATIYLAPLSLIVIM). At 239-274 (YARIGASLFKTSAHSTGKQRLEQWHVSKKKQKVIKM) the chain is on the cytoplasmic side. A helical transmembrane segment spans residues 275–295 (LLTVALLFILSWLPLWTLMML). Residues 296 to 310 (SDYADLSPNKLRVIN) lie on the Extracellular side of the membrane. Residues 311-331 (IYVYPFAHWLAFCNSSVNPII) form a helical membrane-spanning segment. At 332–417 (YGFFNENFRS…TGEATNSTET (86 aa)) the chain is on the cytoplasmic side. The interval 378-417 (HEPASQNPSGENLGCRKSADNPTQESLMEETGEATNSTET) is disordered.

It belongs to the G-protein coupled receptor 1 family.

The protein resides in the cell membrane. Its function is as follows. Receptor for NPAF (A-18-F-amide) and NPFF (F-8-F-amide) neuropeptides, also known as morphine-modulating peptides. Can also be activated by a variety of naturally occurring or synthetic FMRF-amide like ligands. This receptor mediates its action by association with G proteins that activate a phosphatidylinositol-calcium second messenger system. The sequence is that of Neuropeptide FF receptor 2 (Npffr2) from Rattus norvegicus (Rat).